The primary structure comprises 180 residues: MTPAKIRNALLAVVAIALSAAVYLGFQTQTQGISLEAQAQRAIPLATALDNGRPTLVEFYADWCTSCQAMAPDLAELKKNYGGSVNFAMLNVDNNKWLPEVLRYRVDGIPHFVYLDDTGTAIAESIGEQPLRVLEQNITALVAHEPIPYANVTGQTSVVENRTIEADPTSPRSHGNPRPS.

Residues 10-26 traverse the membrane as a helical segment; that stretch reads LLAVVAIALSAAVYLGF. The Thioredoxin domain occupies 34–143; that stretch reads SLEAQAQRAI…LEQNITALVA (110 aa). A disulfide bridge connects residues C64 and C67.

This sequence belongs to the thioredoxin family.

The protein localises to the cell membrane. Required for disulfide bond formation in some proteins. Acts by transferring its disulfide bond to other proteins and is reduced in the process. This is Thiol:disulfide interchange protein TxlA homolog (txlA) from Synechocystis sp. (strain ATCC 27184 / PCC 6803 / Kazusa).